The chain runs to 445 residues: Trigger factor (445 aa).

Residues 162 to 247 (GDQVTIDAIG…IKAVHTAEPT (86 aa)) form the PPIase FKBP-type domain.

It belongs to the FKBP-type PPIase family. Tig subfamily.

The protein localises to the cytoplasm. It catalyses the reaction [protein]-peptidylproline (omega=180) = [protein]-peptidylproline (omega=0). Its function is as follows. Involved in protein export. Acts as a chaperone by maintaining the newly synthesized protein in an open conformation. Functions as a peptidyl-prolyl cis-trans isomerase. The chain is Trigger factor from Rickettsia africae (strain ESF-5).